Reading from the N-terminus, the 419-residue chain is Tyrosine--tRNA ligase (419 aa).

Tyrosine 34 lines the L-tyrosine pocket. The 'HIGH' region motif lies at 39–48 (PTADSLHLGN). 2 residues coordinate L-tyrosine: tyrosine 169 and glutamine 173. A 'KMSKS' region motif is present at residues 229–233 (KFGKS). Lysine 232 serves as a coordination point for ATP. The S4 RNA-binding domain maps to 353–419 (LTLIELLISA…GKKKNFVLTY (67 aa)).

The protein belongs to the class-I aminoacyl-tRNA synthetase family. TyrS type 1 subfamily. Homodimer.

It localises to the cytoplasm. It carries out the reaction tRNA(Tyr) + L-tyrosine + ATP = L-tyrosyl-tRNA(Tyr) + AMP + diphosphate + H(+). Its function is as follows. Catalyzes the attachment of tyrosine to tRNA(Tyr) in a two-step reaction: tyrosine is first activated by ATP to form Tyr-AMP and then transferred to the acceptor end of tRNA(Tyr). The sequence is that of Tyrosine--tRNA ligase from Lactococcus lactis subsp. cremoris (strain SK11).